A 425-amino-acid polypeptide reads, in one-letter code: Transmembrane protein 184A (425 aa).

Helical transmembrane passes span 51–71 (LFLT…TALL), 96–116 (LLFI…LLGG), 133–153 (FVIY…SAIM), 189–209 (TLQF…LQAF), 226–246 (VTLV…LFYF), 261–281 (FLTI…LAIL), and 303–323 (LAAG…SLAL). A disordered region spans residues 375–425 (QYTQQSTHEAPGPGQGGHPSPSTHPGPASGSGGGKKSRNIEKRMLIPSEDL). Low complexity predominate over residues 392-402 (HPSPSTHPGPA).

This sequence belongs to the TMEM184 family. As to expression, expressed in vascular cells (at protein level).

Its subcellular location is the cell membrane. It localises to the cytoplasm. It is found in the perinuclear region. The protein resides in the early endosome membrane. The protein localises to the endosome. Its subcellular location is the cytoplasmic vesicle. It localises to the secretory vesicle membrane. It is found in the cytoplasmic vesicle membrane. Its function is as follows. Acts as a heparin receptor in vascular cells. May be involved in vesicle transport in exocrine cells and Sertoli cells. The sequence is that of Transmembrane protein 184A (Tmem184a) from Rattus norvegicus (Rat).